The chain runs to 136 residues: Histone H2A (136 aa).

Positions methionine 1–alanine 11 are enriched in gly residues. Positions methionine 1 to lysine 23 are disordered. An N6-acetyllysine mark is found at lysine 5 and lysine 10. Residue glutamine 107 is modified to N5-methylglutamine. At serine 133 the chain carries Phosphoserine. The [ST]-Q motif motif lies at serine 133 to glutamine 134.

The protein belongs to the histone H2A family. As to quaternary structure, the nucleosome is a histone octamer containing two molecules each of H2A, H2B, H3 and H4 assembled in one H3-H4 heterotetramer and two H2A-H2B heterodimers. The octamer wraps approximately 147 bp of DNA. Post-translationally, phosphorylated to form H2AS128ph (gamma-H2A) in response to DNA double-strand breaks (DSBs) generated by exogenous genotoxic agents and by stalled replication forks. Phosphorylation is dependent on the DNA damage checkpoint kinases MEC1/ATR and TEL1/ATM, spreads on either side of a detected DSB site and may mark the surrounding chromatin for recruitment of proteins required for DNA damage signaling and repair. Gamma-H2A is removed from the DNA prior to the strand invasion-primer extension step of the repair process and subsequently dephosphorylated. Dephosphorylation is necessary for efficient recovery from the DNA damage checkpoint. Acetylated by ESA1 to form H2AK4ac and H2AK7ac.

It localises to the nucleus. The protein localises to the chromosome. In terms of biological role, core component of nucleosome which plays a central role in DNA double strand break (DSB) repair. Nucleosomes wrap and compact DNA into chromatin, limiting DNA accessibility to the cellular machineries which require DNA as a template. Histones thereby play a central role in transcription regulation, DNA repair, DNA replication and chromosomal stability. DNA accessibility is regulated via a complex set of post-translational modifications of histones, also called histone code, and nucleosome remodeling. The chain is Histone H2A (hta1) from Botryotinia fuckeliana (strain B05.10) (Noble rot fungus).